The sequence spans 796 residues: Peroxisome proliferator-activated receptor gamma coactivator 1-alpha (796 aa).

Residue lysine 77 is modified to N6-acetyllysine. Positions 98–138 (PVDEDGLPSFDALTDGDVTTENEASPSSMPDGTPPPQEAEE) are disordered. Positions 114–127 (DVTTENEASPSSMP) are enriched in polar residues. An LXXLL motif motif is present at residues 142 to 146 (LKKLL). An N6-acetyllysine modification is found at lysine 144. Threonine 176 carries the phosphothreonine; by AMPK modification. Residue lysine 182 is modified to N6-acetyllysine. Positions 211–275 (YLTTNDDPPH…NDPKGSPFEN (65 aa)) are disordered. Positions 217-235 (DPPHTKPTENRNSSRDKCT) are enriched in basic and acidic residues. Positions 242 to 258 (TQSQTQHLQAKPTTLSL) are enriched in polar residues. Lysine 252, lysine 269, lysine 276, and lysine 319 each carry N6-acetyllysine. 2 disordered regions span residues 288 to 374 (GTAG…AKRP) and 398 to 452 (TSQE…RKQL). The segment at 291–337 (GLTPPTTPPHKANQDNPFRASPKLKPSCKTVVPPPSKKARYSESSCT) is interaction with PPARG. The segment covering 332 to 344 (SESSCTQGSNSTK) has biased composition (polar residues). N6-acetyllysine occurs at positions 345 and 411. Positions 348–796 (EQSELYAQLS…LKEAQRSLRR (449 aa)) are mediates interaction with RNF34. Residues 401-412 (ELHDSRQLENKD) are compositionally biased toward basic and acidic residues. 2 stretches are compositionally biased toward polar residues: residues 413 to 428 (APSS…STDS) and 439 to 450 (VSRQVSPGSTRK). Lysine 450 is subject to N6-acetyllysine. Position 538 is a phosphoserine; by AMPK (serine 538). Disordered stretches follow at residues 542-597 (FNSP…SSSR), 609-637 (HRTH…SYEE), and 648-667 (YRRE…ERQR). A compositionally biased stretch (basic residues) spans 562-577 (QRMRSRSRSFSRHRSC). The span at 578 to 597 (SRSPYSRSRSRSPGSRSSSR) shows a compositional bias: low complexity. The RRM domain maps to 675–751 (RVIYVGKIRP…TDFELYFCGR (77 aa)). Lysine 756 and lysine 777 each carry N6-acetyllysine.

As to quaternary structure, homooligomer. Interacts with MYBBP1A; inhibits MYBBP1A transcriptional activation. Interacts with PRDM16, LPIN1 and PML. Interacts (via LXXLL motif) with RORA and RORC (via AF-2 motif); activates RORA and RORC transcriptional activation. Interacts with LRPPRC. Interacts with FOXO1. Interacts with NR5A2. Phosphorylation by AMPK in skeletal muscle increases activation of its own promoter. Phosphorylated by CLK2. Post-translationally, heavily acetylated by KAT2A/GCN5 under conditions of high nutrients, leading to inactivation of PPARGC1A. Deacetylated by SIRT1 in low nutrients/high NAD conditions, leading to its activation. In terms of processing, ubiquitinated. Ubiquitination by RNF34 induces proteasomal degradation.

It is found in the nucleus. The protein resides in the PML body. Transcriptional coactivator for steroid receptors and nuclear receptors. Greatly increases the transcriptional activity of PPARG and thyroid hormone receptor on the uncoupling protein promoter. Can regulate key mitochondrial genes that contribute to the program of adaptive thermogenesis. Plays an essential role in metabolic reprogramming in response to dietary availability through coordination of the expression of a wide array of genes involved in glucose and fatty acid metabolism. Acts as a key regulator of gluconeogenesis: stimulates hepatic gluconeogenesis by increasing the expression of gluconeogenic enzymes, and acting together with FOXO1 to promote the fasting gluconeogenic program. Induces the expression of PERM1 in the skeletal muscle in an ESRRA-dependent manner. Also involved in the integration of the circadian rhythms and energy metabolism. Required for oscillatory expression of clock genes, such as BMAL1 and NR1D1, through the coactivation of RORA and RORC, and metabolic genes, such as PDK4 and PEPCK. The sequence is that of Peroxisome proliferator-activated receptor gamma coactivator 1-alpha (PPARGC1A) from Bos taurus (Bovine).